A 175-amino-acid polypeptide reads, in one-letter code: B9 domain-containing protein 2 (175 aa).

The region spanning 2–118 (AEVHVIGQII…DCPTWRPLGS (117 aa)) is the C2 B9-type domain.

The protein belongs to the B9D family. As to quaternary structure, part of the tectonic-like complex (also named B9 complex). Interacts with TUBG1. In terms of tissue distribution, highest expression in thymus and skeletal muscle. Also expressed in spleen, kidney, lung, heart, microglia and liver. Detected in brain (at protein level).

The protein localises to the cytoplasm. It is found in the cytoskeleton. Its subcellular location is the cilium basal body. It localises to the cilium axoneme. The protein resides in the nucleus. Component of the tectonic-like complex, a complex localized at the transition zone of primary cilia and acting as a barrier that prevents diffusion of transmembrane proteins between the cilia and plasma membranes. This Mus musculus (Mouse) protein is B9 domain-containing protein 2 (B9d2).